Here is a 98-residue protein sequence, read N- to C-terminus: Citrate lyase acyl carrier protein (98 aa).

Ser14 carries the post-translational modification O-(phosphoribosyl dephospho-coenzyme A)serine.

This sequence belongs to the CitD family. In terms of assembly, oligomer with a subunit composition of (alpha,beta,gamma)6.

It is found in the cytoplasm. Functionally, covalent carrier of the coenzyme of citrate lyase. The chain is Citrate lyase acyl carrier protein from Escherichia coli O81 (strain ED1a).